The following is a 302-amino-acid chain: MRVVFMGSPDFSVPVLEALHAHHEVVCVYCQPPRPAGRGKKDRPTPVQARAEELGLPVRHPKSLRTPEVQADFAALGAEVAVVVAYGLILPQPILDAPDRGCLNIHASLLPRWRGAAPIHRAILAGDDETGICIMQMEAGLDTGPVLMCEKTHIGAEDTVQDLHDRLSGMGARLILGAIEALDDLVPQPQPEEGVTYAEKIAKAEAGIDWSRPAAEIDRQIRGLSPFPGAWTMLGGERVKLLRCRLAEGQGAPGELLEGLVIACGSGAVEITLAQREGKRPMERDEFLRGFALPRGSLATAS.

108-111 (SLLP) contacts (6S)-5,6,7,8-tetrahydrofolate.

This sequence belongs to the Fmt family.

It catalyses the reaction L-methionyl-tRNA(fMet) + (6R)-10-formyltetrahydrofolate = N-formyl-L-methionyl-tRNA(fMet) + (6S)-5,6,7,8-tetrahydrofolate + H(+). In terms of biological role, attaches a formyl group to the free amino group of methionyl-tRNA(fMet). The formyl group appears to play a dual role in the initiator identity of N-formylmethionyl-tRNA by promoting its recognition by IF2 and preventing the misappropriation of this tRNA by the elongation apparatus. The protein is Methionyl-tRNA formyltransferase of Cereibacter sphaeroides (strain ATCC 17025 / ATH 2.4.3) (Rhodobacter sphaeroides).